A 207-amino-acid polypeptide reads, in one-letter code: Riboflavin synthase (207 aa).

2 Lumazine-binding repeats span residues 1 to 94 (MFTG…LGGH) and 95 to 191 (IVQG…INYL). 2,4-dihydroxypteridine-binding positions include 4–6 (GLV), 45–47 (CLT), 59–64 (DVSPET), 98–100 (GHV), K133, 142–144 (SLT), and 156–161 (NIIPHT).

In terms of assembly, homotrimer.

The catalysed reaction is 2 6,7-dimethyl-8-(1-D-ribityl)lumazine + H(+) = 5-amino-6-(D-ribitylamino)uracil + riboflavin. Its pathway is cofactor biosynthesis; riboflavin biosynthesis; riboflavin from 2-hydroxy-3-oxobutyl phosphate and 5-amino-6-(D-ribitylamino)uracil: step 2/2. Functionally, catalyzes the dismutation of two molecules of 6,7-dimethyl-8-ribityllumazine, resulting in the formation of riboflavin and 5-amino-6-(D-ribitylamino)uracil. The sequence is that of Riboflavin synthase (ribE) from Aquifex aeolicus (strain VF5).